We begin with the raw amino-acid sequence, 230 residues long: Thymidylate kinase (230 aa).

20 to 27 (GGEGAGKS) lines the ATP pocket.

It belongs to the thymidylate kinase family.

It catalyses the reaction dTMP + ATP = dTDP + ADP. Phosphorylation of dTMP to form dTDP in both de novo and salvage pathways of dTTP synthesis. The protein is Thymidylate kinase of Rhodopseudomonas palustris (strain BisB18).